Here is a 488-residue protein sequence, read N- to C-terminus: Probable malate:quinone oxidoreductase (488 aa).

The protein belongs to the MQO family. Requires FAD as cofactor.

It catalyses the reaction (S)-malate + a quinone = a quinol + oxaloacetate. The protein operates within carbohydrate metabolism; tricarboxylic acid cycle; oxaloacetate from (S)-malate (quinone route): step 1/1. This Neisseria meningitidis serogroup C (strain 053442) protein is Probable malate:quinone oxidoreductase.